Reading from the N-terminus, the 395-residue chain is LIM/homeobox protein Lhx3 (395 aa).

2 consecutive LIM zinc-binding domains span residues 28–78 (CAGC…CKED) and 87–141 (CAAC…CKAD). Positions 154–213 (AKRPRTTITAKQLETLKNAYNNSPKPARHVREQLSSETGLDMRVVQVWFQNRRAKEKRLK) form a DNA-binding region, homeobox. 2 disordered regions span residues 209–325 (EKRL…LQAL) and 348–395 (GGQG…HAQF). Residues 257 to 276 (DEPSMSEMSHSNGIYSNLSE) are compositionally biased toward polar residues.

The protein resides in the nucleus. Functionally, transcription factor. Defines subclasses of motoneurons that segregate into columns in the spinal cord and select distinct axon pathways. Acts in conjunction with LIM-1, ISL-1 and ISL-2. The protein is LIM/homeobox protein Lhx3 (LHX3) of Gallus gallus (Chicken).